A 415-amino-acid polypeptide reads, in one-letter code: Multidrug resistance protein MdtA (415 aa).

An N-terminal signal peptide occupies residues 1 to 21 (MKGSYKSRWVIVIVVVIAAIA). Polar residues predominate over residues 31–47 (DSQSAAPGATKQAQQSP). Disordered regions lie at residues 31-60 (DSQS…GPLA) and 392-415 (EAQS…GARS). Basic and acidic residues predominate over residues 399–415 (PEEKATSREYAKKGARS).

This sequence belongs to the membrane fusion protein (MFP) (TC 8.A.1) family. Part of a tripartite efflux system composed of MdtA, MdtB and MdtC.

The protein resides in the cell inner membrane. Its function is as follows. The MdtABC tripartite complex confers resistance against novobiocin and deoxycholate. In Escherichia coli O8 (strain IAI1), this protein is Multidrug resistance protein MdtA.